We begin with the raw amino-acid sequence, 243 residues long: UPF0758 protein sll0766 (243 aa).

The region spanning 113 to 235 is the MPN domain; that stretch reads VVDSPEAAAI…HQSLRQCTDL (123 aa). Residues His184, His186, and Asp197 each contribute to the Zn(2+) site. A JAMM motif motif is present at residues 184-197; that stretch reads HNHPSGGLEPSPED.

Belongs to the UPF0758 family.

This is UPF0758 protein sll0766 from Synechocystis sp. (strain ATCC 27184 / PCC 6803 / Kazusa).